Here is a 200-residue protein sequence, read N- to C-terminus: Glycerol-3-phosphate acyltransferase (200 aa).

Transmembrane regions (helical) follow at residues 1 to 21, 51 to 71, 84 to 104, 116 to 136, and 159 to 179; these read MITVILIFSAYLLGSISFAVV, VAAAVTLLGDAGKGWVAVVVA, VIASAALAVFLGHLFPIFLAF, ILLGLNLWLGILAILTWIIVA, and FLLQKEMLTITVLIISILLIL.

Belongs to the PlsY family. Probably interacts with PlsX.

It is found in the cell inner membrane. The catalysed reaction is an acyl phosphate + sn-glycerol 3-phosphate = a 1-acyl-sn-glycero-3-phosphate + phosphate. It functions in the pathway lipid metabolism; phospholipid metabolism. In terms of biological role, catalyzes the transfer of an acyl group from acyl-phosphate (acyl-PO(4)) to glycerol-3-phosphate (G3P) to form lysophosphatidic acid (LPA). This enzyme utilizes acyl-phosphate as fatty acyl donor, but not acyl-CoA or acyl-ACP. In Nitrosomonas eutropha (strain DSM 101675 / C91 / Nm57), this protein is Glycerol-3-phosphate acyltransferase.